A 79-amino-acid chain; its full sequence is Delta-hormotoxin-Cpt1a (79 aa).

Positions 1-20 (MKTQVLAVFVLCVLFCLAES) are cleaved as a signal peptide. Positions 21-31 (RTTLNKRIDIA) are excised as a propeptide. 3 disulfide bridges follow: Cys-36/Cys-75, Cys-38/Cys-66, and Cys-56/Cys-76.

This sequence belongs to the sea anemone sodium channel inhibitory toxin family.

It localises to the secreted. The protein localises to the nematocyst. Functionally, in neuromuscular preparation of crustaceans, the toxin increased neurotransmitter release, causing repetitive firing of the axons. May affect sodium channels (Nav). In Calliactis parasitica (Sea anemone), this protein is Delta-hormotoxin-Cpt1a.